Consider the following 730-residue polypeptide: Catalase-peroxidase (730 aa).

Residues 1–11 show a composition bias toward basic and acidic residues; that stretch reads MDAKTDDKDAG. Residues 1-21 form the signal peptide; that stretch reads MDAKTDDKDAGKCPFSSGSHA. Positions 1–24 are disordered; it reads MDAKTDDKDAGKCPFSSGSHAHRN. The segment at residues 96–218 is a cross-link (tryptophyl-tyrosyl-methioninium (Trp-Tyr) (with M-244)); sequence WHSAGTYRIS…LGAVQMGLIY (123 aa). His97 acts as the Proton acceptor in catalysis. The tryptophyl-tyrosyl-methioninium (Tyr-Met) (with W-96) cross-link spans 218-244; sequence YVNPEGPNGNPDPVGSAKDIRETFYRM. His259 is a heme b binding site.

Belongs to the peroxidase family. Peroxidase/catalase subfamily. In terms of assembly, homodimer or homotetramer. Heme b serves as cofactor. Formation of the three residue Trp-Tyr-Met cross-link is important for the catalase, but not the peroxidase activity of the enzyme.

The catalysed reaction is H2O2 + AH2 = A + 2 H2O. It carries out the reaction 2 H2O2 = O2 + 2 H2O. Its function is as follows. Bifunctional enzyme with both catalase and broad-spectrum peroxidase activity. The chain is Catalase-peroxidase from Rhodopseudomonas palustris (strain BisA53).